Consider the following 586-residue polypeptide: Inner membrane protein YejM (586 aa).

The Cytoplasmic segment spans residues 1-20 (MVTHRQRYREKVSQMVSWGH). A helical membrane pass occupies residues 21–43 (WFALFNILLSLVIGSRYLFIADW). Topologically, residues 44–57 (PTTLAGRIYSYVSI) are periplasmic. Residues 58–80 (IGHFSFLVFATYLLILFPLTFIV) form a helical membrane-spanning segment. Over 81–84 (GSQR) the chain is Cytoplasmic. Residues 85–103 (LMRFLSVILATAGMTLLLI) form a helical membrane-spanning segment. Topologically, residues 104–134 (DSEVFTRFHLHLNPIVWQLVINPDENEMARD) are periplasmic. Residues 135–157 (WQLMFISVPVILLLELVFATWSW) form a helical membrane-spanning segment. Residues 158 to 168 (QKLRSLTRRRR) are Cytoplasmic-facing. A helical membrane pass occupies residues 169–191 (FARPLAAFLFIAFIASHVVYIWA). The Periplasmic segment spans residues 192–586 (DANFYRPITM…LTDEKRFIAN (395 aa)).

To H.influenzae HI_0842.

It localises to the cell inner membrane. This chain is Inner membrane protein YejM (yejM), found in Escherichia coli O157:H7.